Here is a 272-residue protein sequence, read N- to C-terminus: MTDAPIGIFDSGVGGLTVARAIRDQLPNESILYVGDTTHSPYGPKPIADVRRYSLEVLDLLVEQGVKLLVIACNTASSAVLRDARERYAVPVVEVIQPAVRRAVAATRTGRVGVIGTVGTIASRAYEDAFAAAPDLRLFPRACPRFVEFVETGVTSGDEVLRVAAEYLQPLRDADVDTLVLGCTHYPFLEGAISYVMGEGVSLVSSDIETAKDVYRILVSGGFERHDSAPPTVRYEATGLDAEHFLRLAHRFIGPEVSQVDLVQTGVIDLSL.

Substrate-binding positions include 10 to 11 and 42 to 43; these read DS and YG. C73 (proton donor/acceptor) is an active-site residue. Position 74 to 75 (74 to 75) interacts with substrate; it reads NT. C183 acts as the Proton donor/acceptor in catalysis. 184 to 185 serves as a coordination point for substrate; the sequence is TH.

Belongs to the aspartate/glutamate racemases family.

It catalyses the reaction L-glutamate = D-glutamate. The protein operates within cell wall biogenesis; peptidoglycan biosynthesis. In terms of biological role, provides the (R)-glutamate required for cell wall biosynthesis. This chain is Glutamate racemase, found in Leifsonia xyli subsp. xyli (strain CTCB07).